Consider the following 1049-residue polypeptide: Multiple C2 domain and transmembrane region protein 16 (1049 aa).

The 112-residue stretch at 1-112 folds into the C2 1 domain; that stretch reads MATTRKLVVE…VGQGEEALIY (112 aa). A disordered region spans residues 136–249; sequence DEKPPPLKPT…PPQNQPDGED (114 aa). Composition is skewed to basic and acidic residues over residues 153–170 and 226–238; these read VEEK…ESKP and ESDK…KPVE. C2 domains lie at 302–426, 460–582, and 617–745; these read TSEI…PQWY, TAGN…SRWL, and VCSD…RNTY. Ca(2+)-binding residues include Ser-338, Asp-390, Thr-393, and Ser-398. Helical transmembrane passes span 883–903 and 989–1009; these read VMLI…LFVI and ATGI…LVPT.

This sequence belongs to the MCTP family. The cofactor is Ca(2+). Expressed in the vascular tissues of roots, cotyledons and rosette leaves. Accumulates in roots meristems and shoot apical meristems (SAMs). Observed in flowers.

The protein localises to the endoplasmic reticulum membrane. In terms of biological role, may function as a signaling molecule by regulating the trafficking of other regulators. The sequence is that of Multiple C2 domain and transmembrane region protein 16 from Arabidopsis thaliana (Mouse-ear cress).